The primary structure comprises 59 residues: Toxin TxpA (59 aa).

The helical transmembrane segment at 7 to 27 threads the bilayer; sequence LMVMIGFANLIGGIMTWVISL.

Its subcellular location is the cell membrane. In terms of biological role, toxic component of a type I toxin-antitoxin (TA) system. Overexpression of txpA causes cell lysis; the TxpA protein has been suggested to act on the cell membrane or might possibly block cell wall synthesis. Overexpression in E.coli is not toxic. In Bacillus subtilis (strain 168), this protein is Toxin TxpA.